The following is a 288-amino-acid chain: Methyltransferase ucsB (288 aa).

S-adenosyl-L-methionine-binding positions include D87 and 121 to 122; that span reads DA.

Belongs to the class I-like SAM-binding methyltransferase superfamily.

The protein operates within mycotoxin biosynthesis. Methyltransferase; part of the gene cluster that mediates the biosynthesis of UCS1025A, a member of the pyrrolizidinone family that acts as a strong telomerase inhibitor and displays potent antibacterial and antitumor properties. These compounds share a hemiaminal-containing pyrrolizidinone core fused with a gamma-lactone, giving a furopyrrolizidine that is connected to a decalin fragment. The polyketide synthase module (PKS) of the PKS-NRPS ucsA is responsible for the synthesis of the polyketide backbone via the condensation of an acetyl-CoA starter unit with 6 malonyl-CoA units. The downstream nonribosomal peptide synthetase (NRPS) module then amidates the carboxyl end of the polyketide with a 2S,3S-methylproline derived from L-isoleucine by the 2-oxoglutarate-dependent dioxygenase ucsF which converts L-isoleucine to (4S,5S)-4-methylpyrroline-5-carboxylate that is further converted to 2S,3S-methylproline by the pyrroline-5-carboxylate reductase ucsG. Reductive release of the completed aminoacyl polyketide from the assembly line can form the 3-pyrrolin-2-one structure via an intramolecular Knoevenagel reaction. Because ucsA lacks a designated enoylreductase (ER) domain, the required activity is provided the enoyl reductase ucsL. This keto acyclic precursor is the substrate of the Diels-Alderase ucsH, that catalyzes the Diels-Alder cycloaddition. Oxidation of the 3S-methyl group to a carboxylate by the cytochrome P450 monooxygenase ucsK allows an oxa-Michael cyclization that might involve the reductase/dehydrogenase ucsI and which furnishes the furopyrrolizidine. The oxidase ucsJ likely plays a critical role in stereoselective reduction of the C5-C6 double bond to afford the required R-configured carboxylate group. Further enolization and oxidation at C5 by an unidentified enzyme affords the last intermediate that can undergo oxa-Michael cyclization to yield UCS1025A. The sequence is that of Methyltransferase ucsB from Acremonium sp.